A 510-amino-acid chain; its full sequence is MTTSIIERIDAWAEKTPDFPCYEYAGTRLSYKELKRQSDAFGSFLLKTLNTDKEKPIIVYGHMSPLMLVAFLGSIKSGRAYVPVDVSMPVERIEQIKKAADPSLFICTEELPSNLTITGCPVLTQDQLMDALEKHFGEVPDKEACVKNDDNYYIIYTSGSTGNPKGVQISQNNLVSFSNWILQDFSLSQGLRFLNQAPFSFDLSVMDLYPSLLSGGTLVPLDKTITANMKDLYREIPAQNLDVWVSTPSFADLCLLDDNFNQENNPGLIHFLFCGEVLAKKTASELLNRFPDAVIYNTYGPTEATVAVTQVKVTREVIDAYPSLPLGVIKPDMRLHIVDQETGEVLPEGEKGEIVLIGASVSKGYLNEPEKTDQVFFDYKGYQAYRTGDSGIIKDGYLFFQGRLDFQIKLHGYRIELEDIENNLKKVSYIQNCAIIPKMKDEKVDMLVAQVIPTNHDFEKEYQLSAAIKNELKEFMPAYMIPRKWIYKTEFPLTMNGKIDRKALNSEVNK.

An ATP-binding site is contributed by 157-158; that stretch reads TS. Asp-202 is a D-alanine binding site. 297–302 contributes to the ATP binding site; the sequence is NTYGPT. Val-306 provides a ligand contact to D-alanine. ATP is bound by residues Asp-389 and Lys-498. Lys-498 is a binding site for D-alanine.

This sequence belongs to the ATP-dependent AMP-binding enzyme family. DltA subfamily.

The protein resides in the cytoplasm. It catalyses the reaction holo-[D-alanyl-carrier protein] + D-alanine + ATP = D-alanyl-[D-alanyl-carrier protein] + AMP + diphosphate. It functions in the pathway cell wall biogenesis; lipoteichoic acid biosynthesis. Catalyzes the first step in the D-alanylation of lipoteichoic acid (LTA), the activation of D-alanine and its transfer onto the D-alanyl carrier protein (Dcp) DltC. In an ATP-dependent two-step reaction, forms a high energy D-alanyl-AMP intermediate, followed by transfer of the D-alanyl residue as a thiol ester to the phosphopantheinyl prosthetic group of the Dcp. D-alanylation of LTA plays an important role in modulating the properties of the cell wall in Gram-positive bacteria, influencing the net charge of the cell wall. This is D-alanine--D-alanyl carrier protein ligase from Listeria monocytogenes serotype 4b (strain CLIP80459).